The chain runs to 865 residues: High affinity cAMP-specific and IBMX-insensitive 3',5'-cyclic phosphodiesterase 8B (865 aa).

Disordered stretches follow at residues 17–40 (CRDS…TAPL) and 52–92 (AMPP…TCRG). The span at 23–36 (SNSPRQTSSVSQGP) shows a compositional bias: polar residues. The segment covering 75–90 (GSGSSTGSSGPATTTC) has biased composition (low complexity). The PAS domain occupies 247-318 (ACNSVFTALD…DTINTCIKKG (72 aa)). A disordered region spans residues 373-415 (IHRDSGDNSQTEPHSFRHKSRRKESIDVKSISSRGSDAPSLQN). Over residues 402–415 (SISSRGSDAPSLQN) the composition is skewed to polar residues. The residue at position 497 (Ser497) is a Phosphoserine. Residues 519-855 (TINDVPPSIA…KHWKTLDDLK (337 aa)) form the PDEase domain. His595 functions as the Proton donor in the catalytic mechanism. The a divalent metal cation site is built by His599, His635, and Asp636. Residues Ser731 and Ser734 each carry the phosphoserine modification. Asp761 lines the a divalent metal cation pocket.

Belongs to the cyclic nucleotide phosphodiesterase family. PDE8 subfamily. A divalent metal cation serves as cofactor. As to expression, widely expressed.

It catalyses the reaction 3',5'-cyclic AMP + H2O = AMP + H(+). It functions in the pathway purine metabolism; 3',5'-cyclic AMP degradation; AMP from 3',5'-cyclic AMP: step 1/1. In terms of biological role, hydrolyzes the second messenger cAMP, which is a key regulator of many important physiological processes. May be involved in specific signaling in the thyroid gland. The polypeptide is High affinity cAMP-specific and IBMX-insensitive 3',5'-cyclic phosphodiesterase 8B (Pde8b) (Mus musculus (Mouse)).